Here is a 515-residue protein sequence, read N- to C-terminus: Maturase K (515 aa).

The protein belongs to the intron maturase 2 family. MatK subfamily.

Its subcellular location is the plastid. It is found in the chloroplast. Its function is as follows. Usually encoded in the trnK tRNA gene intron. Probably assists in splicing its own and other chloroplast group II introns. This Pinus sibirica (Siberian pine) protein is Maturase K.